The primary structure comprises 385 residues: Meiotic recombination protein SPO11-2 (385 aa).

In terms of domain architecture, Topo IIA-type catalytic spans 24-169 (LPPAEVRARI…LGIMASSRGA (146 aa)). Residue Y126 is the O-(5'-phospho-DNA)-tyrosine intermediate of the active site. 2 residues coordinate Mg(2+): E219 and D272.

It belongs to the TOP6A family. Interacts with TOP6B. The cofactor is Mg(2+).

It localises to the nucleus. It carries out the reaction ATP-dependent breakage, passage and rejoining of double-stranded DNA.. Functionally, required for meiotic recombination. Mediates DNA cleavage that forms the double-strand breaks (DSB) that initiate meiotic recombination. This is Meiotic recombination protein SPO11-2 (SPO11-2) from Oryza sativa subsp. japonica (Rice).